The sequence spans 148 residues: uncharacterized protein (148 aa).

The HTH asnC-type domain occupies 3 to 64; the sequence is IDDLDRKILS…KLNYEKLGYE (62 aa). A DNA-binding region (H-T-H motif) is located at residues 22–41; it reads YREIAKKLNVAVGTIYNRIK.

This is an uncharacterized protein from Pyrococcus furiosus (strain ATCC 43587 / DSM 3638 / JCM 8422 / Vc1).